A 710-amino-acid polypeptide reads, in one-letter code: NAD(P)H-quinone oxidoreductase subunit 5, chloroplastic (710 aa).

17 helical membrane-spanning segments follow: residues 9–29 (WIIP…LLIF), 40–60 (WSFQ…YLSI), 89–109 (IDPL…LVLI), 125–145 (FTYM…SNFI), 147–167 (IYIF…FWFT), 185–205 (GDFG…SFEF), 221–241 (VNLL…IAKS), 258–278 (TPIS…FLVA), 280–300 (LLPL…IGII), 327–347 (LGYM…FHLI), 354–374 (ALLF…IGYS), 396–416 (GAFL…CFWS), 425–445 (WLYS…TAFY), 519–539 (MLFP…LGIP), 571–591 (FLKH…IAFL), 657–676 (SFDL…LSFI), and 689–709 (IPFY…LFYK).

This sequence belongs to the complex I subunit 5 family. As to quaternary structure, NDH is composed of at least 16 different subunits, 5 of which are encoded in the nucleus.

The protein localises to the plastid. Its subcellular location is the chloroplast thylakoid membrane. The enzyme catalyses a plastoquinone + NADH + (n+1) H(+)(in) = a plastoquinol + NAD(+) + n H(+)(out). It catalyses the reaction a plastoquinone + NADPH + (n+1) H(+)(in) = a plastoquinol + NADP(+) + n H(+)(out). In terms of biological role, NDH shuttles electrons from NAD(P)H:plastoquinone, via FMN and iron-sulfur (Fe-S) centers, to quinones in the photosynthetic chain and possibly in a chloroplast respiratory chain. The immediate electron acceptor for the enzyme in this species is believed to be plastoquinone. Couples the redox reaction to proton translocation, and thus conserves the redox energy in a proton gradient. This Ipomoea purpurea (Common morning glory) protein is NAD(P)H-quinone oxidoreductase subunit 5, chloroplastic (ndhF).